The following is a 410-amino-acid chain: Argininosuccinate synthase (410 aa).

Position 9–17 (Ala9–Ser17) interacts with ATP. Residue Tyr86 coordinates L-citrulline. Gly116 is a binding site for ATP. L-aspartate contacts are provided by Thr118, Asn122, and Asp123. Position 122 (Asn122) interacts with L-citrulline. Positions 126, 174, 259, and 271 each coordinate L-citrulline.

Belongs to the argininosuccinate synthase family. Type 1 subfamily. As to quaternary structure, homotetramer.

It localises to the cytoplasm. It carries out the reaction L-citrulline + L-aspartate + ATP = 2-(N(omega)-L-arginino)succinate + AMP + diphosphate + H(+). It participates in amino-acid biosynthesis; L-arginine biosynthesis; L-arginine from L-ornithine and carbamoyl phosphate: step 2/3. The chain is Argininosuccinate synthase from Limosilactobacillus reuteri (strain DSM 20016) (Lactobacillus reuteri).